The chain runs to 442 residues: ATP-dependent protease ATPase subunit HslU (442 aa).

ATP-binding positions include Ile-18 and 60–65 (GVGKTE). Positions 136 to 157 (LPKPKNDWESTETDSSSNTRQV) are disordered. 3 residues coordinate ATP: Asp-255, Glu-320, and Arg-392.

It belongs to the ClpX chaperone family. HslU subfamily. In terms of assembly, a double ring-shaped homohexamer of HslV is capped on each side by a ring-shaped HslU homohexamer. The assembly of the HslU/HslV complex is dependent on binding of ATP.

The protein localises to the cytoplasm. Functionally, ATPase subunit of a proteasome-like degradation complex; this subunit has chaperone activity. The binding of ATP and its subsequent hydrolysis by HslU are essential for unfolding of protein substrates subsequently hydrolyzed by HslV. HslU recognizes the N-terminal part of its protein substrates and unfolds these before they are guided to HslV for hydrolysis. The chain is ATP-dependent protease ATPase subunit HslU from Shewanella baltica (strain OS185).